The following is a 531-amino-acid chain: T-complex protein 1 subunit zeta (531 aa).

A2 bears the N-acetylalanine mark. K5 is subject to N6-acetyllysine. ADP is bound at residue G39. G39 provides a ligand contact to ATP. Mg(2+) is bound at residue D90. ADP contacts are provided by G91, T92, T93, S94, T158, and K159. Residues G91, T92, and T93 each coordinate ATP. K199 carries the N6-acetyllysine modification. At S205 the chain carries Phosphoserine. K251 participates in a covalent cross-link: Glycyl lysine isopeptide (Lys-Gly) (interchain with G-Cter in SUMO2). 4 positions are modified to N6-acetyllysine: K287, K365, K377, and K388. A411 is an ADP binding site. A411, G412, D496, and K501 together coordinate ATP. D496 contacts ADP.

Belongs to the TCP-1 chaperonin family. As to quaternary structure, component of the chaperonin-containing T-complex (TRiC), a hexadecamer composed of two identical back-to-back stacked rings enclosing a protein folding chamber. Each ring is made up of eight different subunits: TCP1/CCT1, CCT2, CCT3, CCT4, CCT5, CCT6A/CCT6, CCT7, CCT8. Interacts with PACRG.

The protein resides in the cytoplasm. It catalyses the reaction ATP + H2O = ADP + phosphate + H(+). In terms of biological role, component of the chaperonin-containing T-complex (TRiC), a molecular chaperone complex that assists the folding of actin, tubulin and other proteins upon ATP hydrolysis. The TRiC complex mediates the folding of WRAP53/TCAB1, thereby regulating telomere maintenance. This Pongo abelii (Sumatran orangutan) protein is T-complex protein 1 subunit zeta (CCT6).